Consider the following 61-residue polypeptide: Potassium channel toxin alpha-KTx 6.8 (61 aa).

Positions 1–23 are cleaved as a signal peptide; it reads MNAKFILLLLVVTTTILLPDTQG. 4 disulfide bridges follow: cysteine 29–cysteine 50, cysteine 35–cysteine 55, cysteine 39–cysteine 57, and cysteine 45–cysteine 60. The residue at position 60 (cysteine 60) is a Cysteine amide.

It belongs to the short scorpion toxin superfamily. Potassium channel inhibitor family. Alpha-KTx 06 subfamily. In terms of tissue distribution, expressed by the venom gland.

It localises to the secreted. In terms of biological role, blocker of voltage-gated potassium channels. This is Potassium channel toxin alpha-KTx 6.8 from Opistophthalmus carinatus (African yellow leg scorpion).